The chain runs to 558 residues: Kelch-like protein 23 (558 aa).

Residues 36–104 form the BTB domain; that stretch reads TDITLQCPSG…AYTSQIEITK (69 aa). The region spanning 139–240 is the BACK domain; sequence CIGMHSFAEF…DPVYLKTALG (102 aa). 6 Kelch repeats span residues 274-320, 321-369, 370-416, 418-466, 467-508, and 510-557; these read TMYI…CLGP, NIYV…TLGG, CVYA…VLHD, IYVI…PFEN, KLYL…IMNG, and IYVT…CVYN.

The sequence is that of Kelch-like protein 23 (KLHL23) from Homo sapiens (Human).